An 822-amino-acid chain; its full sequence is Sodium/hydrogen exchanger 1 (822 aa).

Residues 1–102 (MMLRWSGIWG…FPVLDIDYLH (102 aa)) are Extracellular-facing. The interval 41-73 (SPTANTIRGAEPPRERSIGDVTTAPSEPVHHPD) is disordered. The chain crosses the membrane as a helical span at residues 103 to 125 (VRTPFEISLWILLACLMKIGFHV). Over 126–134 (IPTISSIVP) the chain is Cytoplasmic. A helical transmembrane segment spans residues 135–152 (ESCLLIVVGLLVGGLIKG). Topologically, residues 153-162 (VGETPPFLQS) are extracellular. The chain crosses the membrane as a helical span at residues 163–180 (DVFFLFLLPPIILDAGYF). Topologically, residues 181-190 (LPLRQFTENL) are cytoplasmic. A helical transmembrane segment spans residues 191–219 (GTILIFAVVGTLWNAFFLGGLLYAVCLVG). The Extracellular segment spans residues 220-226 (GEQINNI). Residues 227 to 253 (GLLDTLLFGSIISAVDPVAVVAVFEEI) form a helical membrane-spanning segment. Residues 254–256 (HIN) are Cytoplasmic-facing. The helical transmembrane segment at 257 to 287 (ELLHILVFGESLLNDAVTVVLYHLFEEFANY) threads the bilayer. The Extracellular portion of the chain corresponds to 288–291 (DSIG). The helical transmembrane segment at 292-326 (ISDIFLGFLSFFVVALGGVFVGVVYGVIAAFTSRF) threads the bilayer. The Cytoplasmic segment spans residues 327 to 332 (TSHIRV). Residues 333 to 345 (IEPLFVFLYSYMA) form a helical membrane-spanning segment. The Extracellular segment spans residues 346-354 (YLSAELFHL). Residues 355 to 375 (SGIMALIASGVVMRPYVEANI) form a helical membrane-spanning segment. At 376 to 377 (SH) the chain is on the cytoplasmic side. The helical transmembrane segment at 378–408 (KSHTTIKYFLKMWSSVSETLIFIFLGVSTVA) threads the bilayer. At 409-414 (GSHQWN) the chain is on the extracellular side. Residues 415–442 (WTFVISTLLFCLIARVLGVLVLTWFINK) form a helical membrane-spanning segment. Residues 443–448 (FRIVKL) lie on the Cytoplasmic side of the membrane. The chain crosses the membrane as a helical span at residues 449–473 (TPKDQFIIAYGGLRGAIAFSLGYLM). At 474 to 479 (DKKHFP) the chain is on the extracellular side. A helical transmembrane segment spans residues 480–509 (MCDLFLTAIITVIFFTVFVQGMTIRPLVDL). The interval 507-549 (VDLLAVKKKQETKRSINEEIHTQFLDHLLTGIEDICGHYGHHH) is interaction with TESC. Over 510–822 (LAVKKKQETK…EGEPFIPKGE (313 aa)) the chain is Cytoplasmic. Residues 513-520 (KKKQETKR) are PI(4,5)P2-binding region. An interaction with CHP2 region spans residues 519–549 (KRSINEEIHTQFLDHLLTGIEDICGHYGHHH). Residues 544–549 (HYGHHH) form a confers pH-dependent PI(4,5)P2 binding region. Positions 556–564 (RFNKKYVKK) are PI(4,5)P2-binding region. A phosphoserine mark is found at serine 603 and serine 606. Threonine 607 is modified (phosphothreonine). A phosphoserine mark is found at serine 609 and serine 652. Positions 637-822 (KILRSNLQKT…EGEPFIPKGE (186 aa)) are interaction with TESC. The interval 637 to 822 (KILRSNLQKT…EGEPFIPKGE (186 aa)) is interaction with CALM1. Positions 688–691 (LTVP) are interaction with PPP3CA. Residues serine 697, serine 701, and serine 707 each carry the phosphoserine modification. An interaction with PPP3CA region spans residues 719 to 724 (PVITID). A phosphoserine mark is found at serine 727, serine 730, and serine 733. Residues 752–822 (PTRLTRGEED…EGEPFIPKGE (71 aa)) form a disordered region. Threonine 756 carries the phosphothreonine modification. Residues 759–768 (EEDEDEDEDG) show a composition bias toward acidic residues. Phosphothreonine is present on threonine 786. Phosphoserine is present on residues serine 792, serine 794, and serine 803.

Belongs to the monovalent cation:proton antiporter 1 (CPA1) transporter (TC 2.A.36) family. As to quaternary structure, homodimer; dimerization is crucial for its function. Oligomer. Interacts with CALM in a calcium-dependent manner. Interacts with TESC. Interacts (via the juxtamembrane region of the cytoplasmic C-terminal domain) with CHP1; the interaction occurs at the plasma membrane in a calcium-dependent manner. Interacts with CHP2; the interaction occurs in a calcium-dependent manner. Interacts with EZR; regulates the cytoskeletal interactions of SLC9A1 and promotes stress fiber formation. Post-translationally, ubiquitinated, leading to its degradation by the proteasome. Ubiquitination is reduced by CHP1. O-glycosylated. In terms of processing, palmitoylated; may play a major role in SLC9A1 regulation. Post-translationally, phosphorylation at Thr-786 increases SLC9A1 activity. Specifically dephosphorylated at Thr-786 by PPP3CA that negatively regulates SLC9A1 activity. Phosphorylation at Ser-652 by AKT1 reduces SLC9A1 binding to CALM1.

The protein localises to the cell membrane. Its subcellular location is the basolateral cell membrane. It catalyses the reaction Na(+)(in) + H(+)(out) = Na(+)(out) + H(+)(in). The catalysed reaction is Li(+)(out) + H(+)(in) = Li(+)(in) + H(+)(out). The enzyme catalyses Li(+)(in) + Na(+)(out) = Li(+)(out) + Na(+)(in). With respect to regulation, activated at acidic pHs. Inhibited by amiloride and 5-amino-substituted derivatives. Inhibited by cariporide and eniporide. Phosphatidylinositol 4,5-bisphosphate (PI(4,5)P2) and phosphatidylinositol 3,4,5-trisphosphate (PI(3,4,5)P3) bind and differentially regulate SLC9A1 activity. Functionally, electroneutral Na(+) /H(+) antiporter that extrudes Na(+) in exchange for external protons driven by the inward sodium ion chemical gradient, protecting cells from acidification that occurs from metabolism. Exchanges intracellular H(+) ions for extracellular Na(+) in 1:1 stoichiometry. Plays a key role in maintening intracellular pH neutral and cell volume, and thus is important for cell growth, proliferation, migration and survival. In addition, can transport lithium Li(+) and also functions as a Na(+)/Li(+) antiporter. SLC9A1 also functions in membrane anchoring and organization of scaffolding complexes that coordinate signaling inputs. This chain is Sodium/hydrogen exchanger 1 (SLC9A1), found in Cricetulus griseus (Chinese hamster).